A 255-amino-acid polypeptide reads, in one-letter code: Ribosomal RNA small subunit methyltransferase G 2 (255 aa).

Positions 90, 95, and 155 each coordinate S-adenosyl-L-methionine. Acidic residues predominate over residues 233–245; it reads EDEGEELLMDELS. The interval 233–255 is disordered; the sequence is EDEGEELLMDELSNEEKRRWAKY. Positions 246–255 are enriched in basic and acidic residues; the sequence is NEEKRRWAKY.

This sequence belongs to the methyltransferase superfamily. RNA methyltransferase RsmG family.

It localises to the cytoplasm. It carries out the reaction guanosine(527) in 16S rRNA + S-adenosyl-L-methionine = N(7)-methylguanosine(527) in 16S rRNA + S-adenosyl-L-homocysteine. Specifically methylates the N7 position of guanine in position 527 of 16S rRNA. This chain is Ribosomal RNA small subunit methyltransferase G 2, found in Bdellovibrio bacteriovorus (strain ATCC 15356 / DSM 50701 / NCIMB 9529 / HD100).